The sequence spans 565 residues: CTP synthase (565 aa).

The interval 1 to 272 is amidoligase domain; that stretch reads MARPKNVKHI…DLRVMKKLGL (272 aa). CTP is bound at residue Ser-18. Ser-18 contacts UTP. Residue 19–24 participates in ATP binding; it reads SLGKGI. Residue Tyr-59 participates in L-glutamine binding. Residue Asp-76 participates in ATP binding. Positions 76 and 146 each coordinate Mg(2+). Residues 153–155, 193–198, and Lys-229 each bind CTP; these read DIE and KTKPTQ. UTP is bound by residues 193–198 and Lys-229; that span reads KTKPTQ. The Glutamine amidotransferase type-1 domain occupies 299-543; that stretch reads TIGVCGKYTE…VQAAKEFAMG (245 aa). Gly-363 lines the L-glutamine pocket. The active-site Nucleophile; for glutamine hydrolysis is the Cys-390. L-glutamine-binding positions include 391-394, Glu-414, and Arg-471; that span reads LGMQ. Residues His-516 and Glu-518 contribute to the active site.

It belongs to the CTP synthase family. In terms of assembly, homotetramer.

It catalyses the reaction UTP + L-glutamine + ATP + H2O = CTP + L-glutamate + ADP + phosphate + 2 H(+). It carries out the reaction L-glutamine + H2O = L-glutamate + NH4(+). The catalysed reaction is UTP + NH4(+) + ATP = CTP + ADP + phosphate + 2 H(+). It functions in the pathway pyrimidine metabolism; CTP biosynthesis via de novo pathway; CTP from UDP: step 2/2. With respect to regulation, allosterically activated by GTP, when glutamine is the substrate; GTP has no effect on the reaction when ammonia is the substrate. The allosteric effector GTP functions by stabilizing the protein conformation that binds the tetrahedral intermediate(s) formed during glutamine hydrolysis. Inhibited by the product CTP, via allosteric rather than competitive inhibition. Catalyzes the ATP-dependent amination of UTP to CTP with either L-glutamine or ammonia as the source of nitrogen. Regulates intracellular CTP levels through interactions with the four ribonucleotide triphosphates. The protein is CTP synthase of Chlorobaculum parvum (strain DSM 263 / NCIMB 8327) (Chlorobium vibrioforme subsp. thiosulfatophilum).